Here is a 250-residue protein sequence, read N- to C-terminus: uncharacterized protein (250 aa).

Residues histidine 182–alanine 205 are disordered. Pro residues predominate over residues threonine 190–proline 201. Residues threonine 230–leucine 250 traverse the membrane as a helical segment.

Belongs to the ascovirus HvAV ORF18 family.

The protein localises to the membrane. This is an uncharacterized protein from Spodoptera frugiperda ascovirus 1a (SfAV-1a).